The primary structure comprises 362 residues: [LysW]-lysine hydrolase (362 aa).

Histidine 69 contacts Zn(2+). Aspartate 71 is an active-site residue. Aspartate 94 contacts Zn(2+). The Proton acceptor role is filled by glutamate 127. Zn(2+) is bound by residues glutamate 128, glutamate 151, and histidine 334.

This sequence belongs to the peptidase M20A family. LysK subfamily. Zn(2+) serves as cofactor. Co(2+) is required as a cofactor.

It is found in the cytoplasm. It catalyses the reaction [amino-group carrier protein]-C-terminal-gamma-(L-lysyl)-L-glutamate + H2O = [amino-group carrier protein]-C-terminal-L-glutamate + L-lysine. It functions in the pathway amino-acid biosynthesis; L-lysine biosynthesis via AAA pathway; L-lysine from L-alpha-aminoadipate (Thermus route): step 5/5. Functionally, catalyzes the release of L-lysine from [LysW]-gamma-L-lysine. In Deinococcus radiodurans (strain ATCC 13939 / DSM 20539 / JCM 16871 / CCUG 27074 / LMG 4051 / NBRC 15346 / NCIMB 9279 / VKM B-1422 / R1), this protein is [LysW]-lysine hydrolase.